A 155-amino-acid chain; its full sequence is Ribosome maturation factor RimP (155 aa).

Belongs to the RimP family.

It is found in the cytoplasm. In terms of biological role, required for maturation of 30S ribosomal subunits. This Listeria monocytogenes serotype 4b (strain CLIP80459) protein is Ribosome maturation factor RimP.